Reading from the N-terminus, the 61-residue chain is Large ribosomal subunit protein bL28 (61 aa).

The protein belongs to the bacterial ribosomal protein bL28 family.

The protein is Large ribosomal subunit protein bL28 of Nocardioides sp. (strain ATCC BAA-499 / JS614).